Here is a 349-residue protein sequence, read N- to C-terminus: S-adenosylmethionine:tRNA ribosyltransferase-isomerase (349 aa).

Belongs to the QueA family. In terms of assembly, monomer.

It is found in the cytoplasm. The enzyme catalyses 7-aminomethyl-7-carbaguanosine(34) in tRNA + S-adenosyl-L-methionine = epoxyqueuosine(34) in tRNA + adenine + L-methionine + 2 H(+). The protein operates within tRNA modification; tRNA-queuosine biosynthesis. Functionally, transfers and isomerizes the ribose moiety from AdoMet to the 7-aminomethyl group of 7-deazaguanine (preQ1-tRNA) to give epoxyqueuosine (oQ-tRNA). The polypeptide is S-adenosylmethionine:tRNA ribosyltransferase-isomerase (Pseudomonas putida (strain ATCC 700007 / DSM 6899 / JCM 31910 / BCRC 17059 / LMG 24140 / F1)).